The following is a 199-amino-acid chain: uncharacterized protein (199 aa).

4 helical membrane passes run 35 to 55, 57 to 77, 94 to 114, and 131 to 151; these read CELA…IFYD, FVIF…YLEF, LSAA…IFFG, and YYGC…ASFA.

Its subcellular location is the membrane. This is an uncharacterized protein from Caenorhabditis elegans.